We begin with the raw amino-acid sequence, 382 residues long: Lipid-A-disaccharide synthase (382 aa).

The protein belongs to the LpxB family.

The enzyme catalyses 2-N,3-O-bis[(3R)-3-hydroxytetradecanoyl]-alpha-D-glucosaminyl 1-phosphate + UDP-2-N,3-O-bis[(3R)-3-hydroxytetradecanoyl]-alpha-D-glucosamine = lipid A disaccharide (E. coli) + UDP + H(+). The catalysed reaction is a lipid X + a UDP-2-N,3-O-bis[(3R)-3-hydroxyacyl]-alpha-D-glucosamine = a lipid A disaccharide + UDP + H(+). Its pathway is glycolipid biosynthesis; lipid IV(A) biosynthesis; lipid IV(A) from (3R)-3-hydroxytetradecanoyl-[acyl-carrier-protein] and UDP-N-acetyl-alpha-D-glucosamine: step 5/6. In terms of biological role, condensation of UDP-2,3-diacylglucosamine and 2,3-diacylglucosamine-1-phosphate to form lipid A disaccharide, a precursor of lipid A, a phosphorylated glycolipid that anchors the lipopolysaccharide to the outer membrane of the cell. This Escherichia coli O157:H7 protein is Lipid-A-disaccharide synthase.